The chain runs to 240 residues: uncharacterized protein (240 aa).

Disordered regions lie at residues 125–148 (RRLD…EDVD) and 177–240 (DESN…RKSR). Acidic residues predominate over residues 130–148 (SSEDGEEEEENDYIDEDVD). Over residues 192–203 (SPRKSHIDHDFV) the composition is skewed to basic and acidic residues. Residues 204–217 (IPEDEMLSEEEEQE) show a composition bias toward acidic residues. Position 231 is a phosphoserine (serine 231).

This sequence belongs to the UTP5 family.

It localises to the cytoplasm. Its subcellular location is the nucleus. This is an uncharacterized protein from Schizosaccharomyces pombe (strain 972 / ATCC 24843) (Fission yeast).